The primary structure comprises 21 residues: Thioredoxin (21 aa).

Lys3 carries the post-translational modification N6-acetyllysine. At Lys8 the chain carries N6-succinyllysine.

Belongs to the thioredoxin family. As to quaternary structure, homodimer; disulfide-linked. Interacts with TXNIP through the redox-active site. Interacts with MAP3K5 and CASP3. Interacts with APEX1; the interaction stimulates the FOS/JUN AP-1 DNA-binding activity in a redox-dependent manner.

It is found in the nucleus. Its subcellular location is the cytoplasm. The protein localises to the secreted. In terms of biological role, participates in various redox reactions through the reversible oxidation of its active center dithiol to a disulfide and catalyzes dithiol-disulfide exchange reactions. Plays a role in the reversible S-nitrosylation of cysteine residues in target proteins, and thereby contributes to the response to intracellular nitric oxide. Nitrosylates the active site Cys of CASP3 in response to nitric oxide (NO), and thereby inhibits caspase-3 activity. Induces the FOS/JUN AP-1 DNA binding activity in ionizing radiation (IR) cells through its oxidation/reduction status and stimulates AP-1 transcriptional activity. This Canis lupus familiaris (Dog) protein is Thioredoxin (TXN).